We begin with the raw amino-acid sequence, 82 residues long: Cytochrome b-c1 complex subunit 8 (82 aa).

Residues 1 to 43 (MGREFGNLARIRHVISYSLSPFEQRAFPSYFSKGIPNVLRRTR) are Mitochondrial matrix-facing. Residue S16 is modified to Phosphoserine. Residue K33 is modified to N6-acetyllysine; alternate. K33 carries the N6-succinyllysine; alternate modification. A helical membrane pass occupies residues 44-62 (ERILRVAPPFVVVYLIYTW). The Mitochondrial intermembrane segment spans residues 63-82 (GNQEFEQSKRKNPAMYENDK).

It belongs to the UQCRQ/QCR8 family. In terms of assembly, component of the ubiquinol-cytochrome c oxidoreductase (cytochrome b-c1 complex, complex III, CIII), a multisubunit enzyme composed of 11 subunits. The complex is composed of 3 respiratory subunits cytochrome b, cytochrome c1 and Rieske protein UQCRFS1, 2 core protein subunits UQCRC1/QCR1 and UQCRC2/QCR2, and 6 low-molecular weight protein subunits UQCRH/QCR6, UQCRB/QCR7, UQCRQ/QCR8, UQCR10/QCR9, UQCR11/QCR10 and subunit 9, the cleavage product of Rieske protein UQCRFS1. The complex exists as an obligatory dimer and forms supercomplexes (SCs) in the inner mitochondrial membrane with NADH-ubiquinone oxidoreductase (complex I, CI) and cytochrome c oxidase (complex IV, CIV), resulting in different assemblies (supercomplex SCI(1)III(2)IV(1) and megacomplex MCI(2)III(2)IV(2)). Interacts with UQCC6.

Its subcellular location is the mitochondrion inner membrane. In terms of biological role, component of the ubiquinol-cytochrome c oxidoreductase, a multisubunit transmembrane complex that is part of the mitochondrial electron transport chain which drives oxidative phosphorylation. The respiratory chain contains 3 multisubunit complexes succinate dehydrogenase (complex II, CII), ubiquinol-cytochrome c oxidoreductase (cytochrome b-c1 complex, complex III, CIII) and cytochrome c oxidase (complex IV, CIV), that cooperate to transfer electrons derived from NADH and succinate to molecular oxygen, creating an electrochemical gradient over the inner membrane that drives transmembrane transport and the ATP synthase. The cytochrome b-c1 complex catalyzes electron transfer from ubiquinol to cytochrome c, linking this redox reaction to translocation of protons across the mitochondrial inner membrane, with protons being carried across the membrane as hydrogens on the quinol. In the process called Q cycle, 2 protons are consumed from the matrix, 4 protons are released into the intermembrane space and 2 electrons are passed to cytochrome c. This chain is Cytochrome b-c1 complex subunit 8 (Uqcrq), found in Mus musculus (Mouse).